The chain runs to 163 residues: MHSLPRSGSIRRTHSDTQATGWPPPQRIGDSPGPSPAFLSCPPSLCGGAAQTGDPVALPHGPEKWVWGGGLSPRNPHSWGIKAHGLRPPWAPRLERCMVPESEWAPWQPQLPCEPKWLGSRKSKPHRESGLRGGGPSRCAKRGTHSCGPRESGGPDTCHLPCH.

Disordered regions lie at residues 1–78 (MHSL…NPHS) and 115–163 (PKWL…LPCH).

This is an uncharacterized protein from Homo sapiens (Human).